Reading from the N-terminus, the 125-residue chain is UPF0763 protein NAMH_0545 (125 aa).

Belongs to the UPF0763 family.

This is UPF0763 protein NAMH_0545 from Nautilia profundicola (strain ATCC BAA-1463 / DSM 18972 / AmH).